Consider the following 632-residue polypeptide: MAESKVEHLLDSIHFPEDLRHLSQDKLEQVCADLRQYIIDVLSENPGHLGASLGTVELTVALHYVFNTPYDRIVWDVGHQAYGHKILTGRKDIFHTLRKFKGISGFPNPAESEYDAFIAGHASNSISAAMGMSVASALKKELDRHVIAVIGDGAMTGGLAFEGLNNASANPNNLLIILNDNDMAIDHSVGGLSQYLVDITTSQAYNKMRYDVYRGLKKIKLINNDRRENILRFNNSLKALLTQQHNLFEGFSIRYFGPVDGHDVNYLVKVLNDIKDMQGPKLLHIKTKKGKGFKPAEESATEWHAPGKFNKETGQRIIVRKLDEPQLYQDVFGHTLVELAENDERIVGVTPAMPSGCSMTYMMKAFPDRAFDVGIAEGHSVTFSAGLAKEGMIPFCNVYSSFMQRAYDMVIHDVALQKLHMVICLDRAGLVGEDGATHHGVFDLAYLRPIPNLVIASPLNELDLRNLMYTGYAAFDGPFVIRYPRGKGEMKDWRNEMQVLPIGKGKKLRDGDDIAVLSIGPIGNEVIKAIEMVKEERVSIAHYDMIYLKPLDEELLHEIGQKYNRIITVENGVIKGGFGSAVLEFMADNGYTPHVKRIGVPDAFIEHGSIPELYQLCGMDAESIAKQLKKEN.

Thiamine diphosphate contacts are provided by residues His-79 and 120 to 122; that span reads GHA. Mg(2+) is bound at residue Asp-152. Residues 153-154, Asn-181, Phe-293, and Glu-377 contribute to the thiamine diphosphate site; that span reads GA. Residue Asn-181 participates in Mg(2+) binding.

This sequence belongs to the transketolase family. DXPS subfamily. In terms of assembly, homodimer. Requires Mg(2+) as cofactor. Thiamine diphosphate serves as cofactor.

The enzyme catalyses D-glyceraldehyde 3-phosphate + pyruvate + H(+) = 1-deoxy-D-xylulose 5-phosphate + CO2. Its pathway is metabolic intermediate biosynthesis; 1-deoxy-D-xylulose 5-phosphate biosynthesis; 1-deoxy-D-xylulose 5-phosphate from D-glyceraldehyde 3-phosphate and pyruvate: step 1/1. In terms of biological role, catalyzes the acyloin condensation reaction between C atoms 2 and 3 of pyruvate and glyceraldehyde 3-phosphate to yield 1-deoxy-D-xylulose-5-phosphate (DXP). The polypeptide is 1-deoxy-D-xylulose-5-phosphate synthase (Parabacteroides distasonis (strain ATCC 8503 / DSM 20701 / CIP 104284 / JCM 5825 / NCTC 11152)).